Reading from the N-terminus, the 238-residue chain is Lactate utilization protein A (238 aa).

It belongs to the LutA/YkgE family.

In terms of biological role, is involved in L-lactate degradation and allows cells to grow with lactate as the sole carbon source. The polypeptide is Lactate utilization protein A (Anoxybacillus flavithermus (strain DSM 21510 / WK1)).